Consider the following 439-residue polypeptide: Histidine--tRNA ligase (439 aa).

Belongs to the class-II aminoacyl-tRNA synthetase family. Homodimer.

The protein localises to the cytoplasm. The catalysed reaction is tRNA(His) + L-histidine + ATP = L-histidyl-tRNA(His) + AMP + diphosphate + H(+). The chain is Histidine--tRNA ligase (hisS) from Leptospira interrogans serogroup Icterohaemorrhagiae serovar Lai (strain 56601).